The sequence spans 502 residues: NADH-quinone oxidoreductase subunit N (502 aa).

A run of 14 helical transmembrane segments spans residues 16 to 36, 47 to 67, 85 to 105, 113 to 133, 138 to 158, 172 to 192, 213 to 233, 248 to 268, 273 to 293, 310 to 330, 337 to 357, 387 to 407, 410 to 430, and 470 to 490; these read TLVPMLIPIIGALFIIVIDLF, MLSLLILGVDFVALVDSAGVF, LAILSQFIIVGASMLFIPLAL, FSYPEFFALFLFMIAGFQFMV, LILIFVGLETASLALYTLIAM, FTMGALAAGFFSFGSMVFYAL, IGFVLVGVVFLLAAFGFKLSM, SAALAGYMSIVPKIAAFIVAM, FLIHSGVVWLEVILYMGVVVT, MLAYSSISHAGFVMAAILIGT, LFLYWILFSFTNLGSFSMLWI, ASIMALFMLSLAGIPPFALFW, MYLMSSAITGGYTVLALIMAL, and TIIGIAAIGTIFAFVAVNQLI.

The protein belongs to the complex I subunit 2 family. In terms of assembly, NDH-1 is composed of 14 different subunits. Subunits NuoA, H, J, K, L, M, N constitute the membrane sector of the complex.

The protein localises to the cell inner membrane. The catalysed reaction is a quinone + NADH + 5 H(+)(in) = a quinol + NAD(+) + 4 H(+)(out). Functionally, NDH-1 shuttles electrons from NADH, via FMN and iron-sulfur (Fe-S) centers, to quinones in the respiratory chain. The immediate electron acceptor for the enzyme in this species is believed to be ubiquinone. Couples the redox reaction to proton translocation (for every two electrons transferred, four hydrogen ions are translocated across the cytoplasmic membrane), and thus conserves the redox energy in a proton gradient. The protein is NADH-quinone oxidoreductase subunit N of Sulfurimonas denitrificans (strain ATCC 33889 / DSM 1251) (Thiomicrospira denitrificans (strain ATCC 33889 / DSM 1251)).